We begin with the raw amino-acid sequence, 110 residues long: Insulin (110 aa).

Residues 1–24 (MALWMRLLPLLAFLILWEPSPAHA) form the signal peptide. Disulfide bonds link Cys-31–Cys-96, Cys-43–Cys-109, and Cys-95–Cys-100. Residues 57-87 (GVDDPQMPQLELGGSPGAGDLRALALEVARQ) constitute a propeptide, c peptide.

This sequence belongs to the insulin family. In terms of assembly, heterodimer of a B chain and an A chain linked by two disulfide bonds.

The protein localises to the secreted. Insulin decreases blood glucose concentration. It increases cell permeability to monosaccharides, amino acids and fatty acids. It accelerates glycolysis, the pentose phosphate cycle, and glycogen synthesis in liver. The polypeptide is Insulin (INS) (Psammomys obesus (Fat sand rat)).